Consider the following 156-residue polypeptide: Small ribosomal subunit protein uS7 (156 aa).

The protein belongs to the universal ribosomal protein uS7 family. As to quaternary structure, part of the 30S ribosomal subunit. Contacts proteins S9 and S11.

One of the primary rRNA binding proteins, it binds directly to 16S rRNA where it nucleates assembly of the head domain of the 30S subunit. Is located at the subunit interface close to the decoding center, probably blocks exit of the E-site tRNA. The protein is Small ribosomal subunit protein uS7 of Chlorobaculum tepidum (strain ATCC 49652 / DSM 12025 / NBRC 103806 / TLS) (Chlorobium tepidum).